The chain runs to 333 residues: Probable ABC transporter permease protein y4mJ (333 aa).

10 helical membrane-spanning segments follow: residues 30–50 (LAIA…VPQA), 62–82 (AGAP…TGGI), 84–104 (LSVG…MASG), 110–130 (ALIG…LVTV), 133–153 (LAPF…AFIV), 175–195 (IPGV…IEIF), 228–248 (FAYV…ISYI), 253–273 (STAG…GGAS), 274–294 (LLGG…ITVI), and 300–320 (LIGI…LIAV).

It belongs to the binding-protein-dependent transport system permease family. AraH/RbsC subfamily.

Its subcellular location is the cell inner membrane. Probably part of the binding-protein-dependent transport system y4mIJK. This system probably transports a sugar. Probably responsible for the translocation of the substrate across the membrane. The protein is Probable ABC transporter permease protein y4mJ of Sinorhizobium fredii (strain NBRC 101917 / NGR234).